Here is a 337-residue protein sequence, read N- to C-terminus: Holliday junction branch migration complex subunit RuvB (337 aa).

Positions 4–186 (ADRLIAADNP…FGIVQRLEYY (183 aa)) are large ATPase domain (RuvB-L). Residues I25, R26, G67, K70, T71, T72, 133–135 (EDY), R176, Y186, and R223 contribute to the ATP site. Position 71 (T71) interacts with Mg(2+). The segment at 187-257 (KVEDLQHIVQ…IADKALNMLD (71 aa)) is small ATPAse domain (RuvB-S). The tract at residues 260–337 (VRGFDYMDRK…LHFGIDKPDK (78 aa)) is head domain (RuvB-H). DNA-binding residues include R296, R315, and R320.

The protein belongs to the RuvB family. In terms of assembly, homohexamer. Forms an RuvA(8)-RuvB(12)-Holliday junction (HJ) complex. HJ DNA is sandwiched between 2 RuvA tetramers; dsDNA enters through RuvA and exits via RuvB. An RuvB hexamer assembles on each DNA strand where it exits the tetramer. Each RuvB hexamer is contacted by two RuvA subunits (via domain III) on 2 adjacent RuvB subunits; this complex drives branch migration. In the full resolvosome a probable DNA-RuvA(4)-RuvB(12)-RuvC(2) complex forms which resolves the HJ.

It localises to the cytoplasm. It catalyses the reaction ATP + H2O = ADP + phosphate + H(+). Its function is as follows. The RuvA-RuvB-RuvC complex processes Holliday junction (HJ) DNA during genetic recombination and DNA repair, while the RuvA-RuvB complex plays an important role in the rescue of blocked DNA replication forks via replication fork reversal (RFR). RuvA specifically binds to HJ cruciform DNA, conferring on it an open structure. The RuvB hexamer acts as an ATP-dependent pump, pulling dsDNA into and through the RuvAB complex. RuvB forms 2 homohexamers on either side of HJ DNA bound by 1 or 2 RuvA tetramers; 4 subunits per hexamer contact DNA at a time. Coordinated motions by a converter formed by DNA-disengaged RuvB subunits stimulates ATP hydrolysis and nucleotide exchange. Immobilization of the converter enables RuvB to convert the ATP-contained energy into a lever motion, pulling 2 nucleotides of DNA out of the RuvA tetramer per ATP hydrolyzed, thus driving DNA branch migration. The RuvB motors rotate together with the DNA substrate, which together with the progressing nucleotide cycle form the mechanistic basis for DNA recombination by continuous HJ branch migration. Branch migration allows RuvC to scan DNA until it finds its consensus sequence, where it cleaves and resolves cruciform DNA. This is Holliday junction branch migration complex subunit RuvB from Aliivibrio fischeri (strain ATCC 700601 / ES114) (Vibrio fischeri).